Here is a 208-residue protein sequence, read N- to C-terminus: LexA repressor (208 aa).

Positions 30 to 50 (VREIGKSVGLSSSSTVAAYLE) form a DNA-binding region, H-T-H motif. Residues S129 and K167 each act as for autocatalytic cleavage activity in the active site.

This sequence belongs to the peptidase S24 family. Homodimer.

The catalysed reaction is Hydrolysis of Ala-|-Gly bond in repressor LexA.. Represses a number of genes involved in the response to DNA damage (SOS response), including recA and lexA. In the presence of single-stranded DNA, RecA interacts with LexA causing an autocatalytic cleavage which disrupts the DNA-binding part of LexA, leading to derepression of the SOS regulon and eventually DNA repair. This Lacticaseibacillus casei (strain BL23) (Lactobacillus casei) protein is LexA repressor.